The primary structure comprises 995 residues: DNA polymerase (995 aa).

It belongs to the DNA polymerase type-B family.

It carries out the reaction DNA(n) + a 2'-deoxyribonucleoside 5'-triphosphate = DNA(n+1) + diphosphate. In Kluyveromyces lactis (strain ATCC 8585 / CBS 2359 / DSM 70799 / NBRC 1267 / NRRL Y-1140 / WM37) (Yeast), this protein is DNA polymerase (RF1).